Here is a 304-residue protein sequence, read N- to C-terminus: Polyisoprenyl-teichoic acid--peptidoglycan teichoic acid transferase TagU (304 aa).

Topologically, residues 1–3 (MKK) are cytoplasmic. Residues 4–24 (ALIAIGLILGTITVAIIGYGI) traverse the membrane as a helical; Signal-anchor for type II membrane protein segment. The Extracellular portion of the chain corresponds to 25 to 304 (YLYSSIQNTA…GELKSHLELS (280 aa)).

This sequence belongs to the LytR/CpsA/Psr (LCP) family.

It localises to the cell membrane. Its pathway is cell wall biogenesis. May catalyze the final step in cell wall teichoic acid biosynthesis, the transfer of the anionic cell wall polymers (APs) from their lipid-linked precursor to the cell wall peptidoglycan (PG). The chain is Polyisoprenyl-teichoic acid--peptidoglycan teichoic acid transferase TagU from Halalkalibacterium halodurans (strain ATCC BAA-125 / DSM 18197 / FERM 7344 / JCM 9153 / C-125) (Bacillus halodurans).